The chain runs to 253 residues: Phosphoadenosine 5'-phosphosulfate reductase (253 aa).

C239 (nucleophile; cysteine thiosulfonate intermediate) is an active-site residue.

Belongs to the PAPS reductase family. CysH subfamily.

The protein resides in the cytoplasm. The enzyme catalyses [thioredoxin]-disulfide + sulfite + adenosine 3',5'-bisphosphate + 2 H(+) = [thioredoxin]-dithiol + 3'-phosphoadenylyl sulfate. It participates in sulfur metabolism; hydrogen sulfide biosynthesis; sulfite from sulfate: step 3/3. Catalyzes the formation of sulfite from phosphoadenosine 5'-phosphosulfate (PAPS) using thioredoxin as an electron donor. This is Phosphoadenosine 5'-phosphosulfate reductase from Aliivibrio fischeri (strain ATCC 700601 / ES114) (Vibrio fischeri).